Consider the following 313-residue polypeptide: Porphobilinogen deaminase (313 aa).

Residue Cys-242 is modified to S-(dipyrrolylmethanemethyl)cysteine.

It belongs to the HMBS family. In terms of assembly, monomer. Requires dipyrromethane as cofactor.

It carries out the reaction 4 porphobilinogen + H2O = hydroxymethylbilane + 4 NH4(+). The protein operates within porphyrin-containing compound metabolism; protoporphyrin-IX biosynthesis; coproporphyrinogen-III from 5-aminolevulinate: step 2/4. Functionally, tetrapolymerization of the monopyrrole PBG into the hydroxymethylbilane pre-uroporphyrinogen in several discrete steps. This is Porphobilinogen deaminase from Pseudomonas putida (strain ATCC 700007 / DSM 6899 / JCM 31910 / BCRC 17059 / LMG 24140 / F1).